The sequence spans 173 residues: MSIEVVDESSFAQGRGVDTVEVSHLARYVLDEMRVHPLAELSVLMVDVEAMARLHVQWMDEPGPTDVMSFPMDQLRPGREGRTSEPGLLGDVVVCPQVAAEQAKASGHATADEVLLLVAHGILHLLGYDHAEPDEEREMFTLQRRLVLGFLARIGRPGDPTPTVGHRALPAGD.

Zn(2+) is bound by residues His-120, His-124, and His-130.

Belongs to the endoribonuclease YbeY family. Zn(2+) serves as cofactor.

The protein localises to the cytoplasm. Its function is as follows. Single strand-specific metallo-endoribonuclease involved in late-stage 70S ribosome quality control and in maturation of the 3' terminus of the 16S rRNA. This Kineococcus radiotolerans (strain ATCC BAA-149 / DSM 14245 / SRS30216) protein is Endoribonuclease YbeY.